The chain runs to 311 residues: Cathepsin B (311 aa).

Positions 1 to 19 (MRVLLSLVVILFIINSAFA) are cleaved as a signal peptide. The propeptide occupies 20–78 (VKINIGRPTKSHKTIHHETWVEEQTDQFDNIKVGQLLGFKRSPNRPKLQIKSYDPLGVQ). Asn-91 carries an N-linked (GlcNAc...) asparagine glycan. 5 disulfide bridges follow: Cys-92-Cys-121, Cys-104-Cys-145, Cys-138-Cys-191, Cys-167-Cys-195, and Cys-175-Cys-182. Residue Cys-107 is part of the active site. A glycan (N-linked (GlcNAc...) asparagine) is linked at Asn-198. Residues His-261 and Asn-281 contribute to the active site. A glycan (N-linked (GlcNAc...) asparagine) is linked at Asn-290.

It belongs to the peptidase C1 family.

The protein resides in the lysosome. The enzyme catalyses Hydrolysis of proteins with broad specificity for peptide bonds. Preferentially cleaves -Arg-Arg-|-Xaa bonds in small molecule substrates (thus differing from cathepsin L). In addition to being an endopeptidase, shows peptidyl-dipeptidase activity, liberating C-terminal dipeptides.. Its function is as follows. Thiol protease which is believed to participate in intracellular degradation and turnover of proteins. In Dictyostelium discoideum (Social amoeba), this protein is Cathepsin B (ctsB).